The following is a 253-amino-acid chain: Large ribosomal subunit protein mL57 (253 aa).

Residues 1–28 constitute a mitochondrion transit peptide; that stretch reads MENSMMFISRSLRRPVTALNCNLQSVRT.

It belongs to the ribonuclease III family. Mitochondrion-specific ribosomal protein mL57 subfamily. In terms of assembly, component of the mitochondrial large ribosomal subunit (mt-LSU). Mature yeast 74S mitochondrial ribosomes consist of a small (37S) and a large (54S) subunit. The 37S small subunit contains a 15S ribosomal RNA (15S mt-rRNA) and 34 different proteins. The 54S large subunit contains a 21S rRNA (21S mt-rRNA) and 46 different proteins. mL57 forms a heterodimer with mL44 and stabilizes rRNA expansion segments 1/2 at a membrane-facing protuberance close to the point of attachment of the ribosome to the translocon in the membrane.

The protein localises to the mitochondrion. Its function is as follows. Component of the mitochondrial ribosome (mitoribosome), a dedicated translation machinery responsible for the synthesis of mitochondrial genome-encoded proteins, including at least some of the essential transmembrane subunits of the mitochondrial respiratory chain. The mitoribosomes are attached to the mitochondrial inner membrane and translation products are cotranslationally integrated into the membrane. This chain is Large ribosomal subunit protein mL57 (MRPL15), found in Saccharomyces cerevisiae (strain ATCC 204508 / S288c) (Baker's yeast).